A 432-amino-acid chain; its full sequence is Sphingosine N-acyltransferase-like protein ALT7 (432 aa).

A helical transmembrane segment spans residues 55–75 (IGLSLGSLLLLILMFTCLPYY). N-linked (GlcNAc...) asparagine glycosylation occurs at asparagine 77. Helical transmembrane passes span 91–111 (FIFS…IYLL), 128–148 (FTEQ…GMYI), 172–192 (GLTK…IVVV), 226–246 (VGNV…FAKL), 250–270 (LGFQ…WLVA), 273–293 (GLYL…MPYG), and 338–358 (AFLG…GMIL). The 244-residue stretch at 123–366 (KLMVRFTEQG…ILKVAYKVFQ (244 aa)) folds into the TLC domain. The segment at 370 to 395 (ADDTRSDSEESGYGTSDHEGDCYGAQ) is disordered.

It belongs to the sphingosine N-acyltransferase family.

The protein localises to the membrane. Its pathway is mycotoxin biosynthesis. Its function is as follows. Sphingosine N-acyltransferase-like protein; part of the gene cluster that mediates the biosynthesis of the host-selective toxins (HSTs) AAL-toxins, sphinganine-analog mycotoxins responsible for Alternaria stem canker on tomato by the tomato pathotype. The biosynthesis starts with the polyketide synthase ALT1-catalyzed C-16 carbon chain assembly from one starter acetyl-CoA unit with malonyl-CoA extender units. ALT1 also selectively transfers methyl groups at the first and the third cycle of chain elongation for AAL toxin. The C-16 polyketide chain is released from the enzyme by a nucleophilic attack of a carbanion, which is derived from R-carbon of glycin by decarboxylation, on the carbonyl carbon of polyketide acyl chain. This step is probably catalyzed by a pyridoxal 5'-phosphate-dependent aminoacyl transferase ALT4. The respective functions of the other enzymes encoded by the cluster have still to be elucidated. The sphingosine N-acyltransferase-like protein ALT7 seems not to act as a resistance/self-tolerance factor against the toxin in the toxin biosynthetic gene cluster, contrary to what is expected. The polypeptide is Sphingosine N-acyltransferase-like protein ALT7 (Alternaria alternata (Alternaria rot fungus)).